The sequence spans 22 residues: uncharacterized protein (22 aa).

It belongs to the asfivirus C84L family.

This is an uncharacterized protein from Ornithodoros (relapsing fever ticks).